We begin with the raw amino-acid sequence, 99 residues long: Regulatory protein FanB (99 aa).

In terms of biological role, trans-acting protein involved in the regulation of the biogenesis of K99 fimbriae (FanC). This is Regulatory protein FanB (fanB) from Escherichia coli.